Reading from the N-terminus, the 181-residue chain is Ubiquitin-like protein 4B (181 aa).

The region spanning Met-1 to Lys-76 is the Ubiquitin-like domain. Residues Pro-139–Lys-181 form a disordered region. Basic and acidic residues-rich tracts occupy residues Arg-151–Arg-161 and Ala-168–Lys-181.

It localises to the cytoplasm. This Monodelphis domestica (Gray short-tailed opossum) protein is Ubiquitin-like protein 4B (UBL4B).